The primary structure comprises 481 residues: Aspartyl/glutamyl-tRNA(Asn/Gln) amidotransferase subunit B (481 aa).

Belongs to the GatB/GatE family. GatB subfamily. Heterotrimer of A, B and C subunits.

The catalysed reaction is L-glutamyl-tRNA(Gln) + L-glutamine + ATP + H2O = L-glutaminyl-tRNA(Gln) + L-glutamate + ADP + phosphate + H(+). It catalyses the reaction L-aspartyl-tRNA(Asn) + L-glutamine + ATP + H2O = L-asparaginyl-tRNA(Asn) + L-glutamate + ADP + phosphate + 2 H(+). Functionally, allows the formation of correctly charged Asn-tRNA(Asn) or Gln-tRNA(Gln) through the transamidation of misacylated Asp-tRNA(Asn) or Glu-tRNA(Gln) in organisms which lack either or both of asparaginyl-tRNA or glutaminyl-tRNA synthetases. The reaction takes place in the presence of glutamine and ATP through an activated phospho-Asp-tRNA(Asn) or phospho-Glu-tRNA(Gln). The sequence is that of Aspartyl/glutamyl-tRNA(Asn/Gln) amidotransferase subunit B from Pseudomonas putida (strain ATCC 47054 / DSM 6125 / CFBP 8728 / NCIMB 11950 / KT2440).